Here is a 628-residue protein sequence, read N- to C-terminus: Propionate--CoA ligase (628 aa).

It belongs to the ATP-dependent AMP-binding enzyme family.

It catalyses the reaction propanoate + ATP + CoA = propanoyl-CoA + AMP + diphosphate. It participates in organic acid metabolism; propanoate degradation. In terms of biological role, catalyzes the synthesis of propionyl-CoA from propionate and CoA. Also converts acetate to acetyl-CoA but with a lower specific activity. The polypeptide is Propionate--CoA ligase (prpE) (Salmonella typhimurium (strain LT2 / SGSC1412 / ATCC 700720)).